A 366-amino-acid chain; its full sequence is GTP cyclohydrolase 1 type 2 homolog (366 aa).

Positions 64, 65, 102, 326, and 329 each coordinate a divalent metal cation.

The protein belongs to the GTP cyclohydrolase I type 2/NIF3 family. Homohexamer.

This Staphylococcus epidermidis (strain ATCC 12228 / FDA PCI 1200) protein is GTP cyclohydrolase 1 type 2 homolog.